A 180-amino-acid polypeptide reads, in one-letter code: Large ribosomal subunit protein uL6 (180 aa).

Belongs to the universal ribosomal protein uL6 family. Part of the 50S ribosomal subunit.

This protein binds to the 23S rRNA, and is important in its secondary structure. It is located near the subunit interface in the base of the L7/L12 stalk, and near the tRNA binding site of the peptidyltransferase center. This chain is Large ribosomal subunit protein uL6, found in Salinispora arenicola (strain CNS-205).